The primary structure comprises 72 residues: Disintegrin cereberin (72 aa).

Residues 1–72 form the Disintegrin domain; that stretch reads EAGEECDCGS…SADCPRNRFH (72 aa). Cystine bridges form between cysteine 6–cysteine 21, cysteine 8–cysteine 16, cysteine 15–cysteine 38, cysteine 29–cysteine 35, cysteine 34–cysteine 59, and cysteine 47–cysteine 66. A Cell attachment site motif is present at residues 51–53; that stretch reads RGD. Residues 51–72 form a disordered region; the sequence is RGDNPDDRCTGQSADCPRNRFH.

It belongs to the venom metalloproteinase (M12B) family. P-II subfamily. P-IIa sub-subfamily. Monomer (disintegrin). Expressed by the venom gland.

It is found in the secreted. Its function is as follows. Inhibits fibrinogen interaction with platelet. Acts by binding to alpha-IIb/beta-3 (ITGA2B/ITGB3) on the platelet surface and inhibits aggregation induced by ADP, thrombin, platelet-activating factor and collagen. This chain is Disintegrin cereberin, found in Crotalus cerberus (Arizona black rattlesnake).